We begin with the raw amino-acid sequence, 1285 residues long: MSGTFSRCMCTPAARVFWNAGQVFCTRCLSARSLLSPELQDTDLGAVGLFYKPRDKLHWKVPIGIPQVECTPSGCCWLSAVFPLARMTSGNHNFLQRLVKVADVLYRDGCLAPRHLRELQVYERGCNWYPITGPVPGMGLFANSMHVSDQPFPGATHVLTNSPLPQQACRQPFCPFEEAHSSVYRWKKFVVFTDSSLNGRSRMMWTPESDDSAALEVLPPELERQVEILIRSFPAHHPVDLADWELTESPENGFSFNTSHSCGHLVQNPDVFDGKCWLSCFLGQSVEVRCHEEHLADAFGYQTKWGVHGKYLQRRLQVRGIRAVVDPDGPIHVEALSCPQSWIRHLTLDDDVTPGFVRLTSLRIVPNTEPTTSRIFRFGAHKWYGAAGKRARAKRAAKSEKDSAPTPKVALPVPTCGITTYSPPTDGSCGWHVLAAIMNRMINGDFTSPLTQYNRPEDDWASDYDLVQAIQCLRLPATVVRNRACPNAKYLIKLNGVHWEVEVRSGMAPRSLSRECVVGVCSEGCVAPPYPADGLPKRALEALASAYRLPSDCVSSGIADFLANPPPQEFWTLDKMLTSPSPERSGFSSLYKLLLEVVPQKCGATEGAFIYAVERMLKDCPSSKQAMALLAKIKVPSSKAPSVSLDECFPTDVLADFEPASQERPQSSGAAVVLCSPDAKEFEEAAPEEVQESGHKAVHSALLAEGPNNEQVQVVAGEQLKLGGCGLAVGNAHEGALVSAGLINLVGGNLSPSDPMKENMLNSREDEPLDLSQPAPASTTTLVREQTPDNPGSDAGALPVTVREFVPTGPILCHVEHCGTESGDSSSPLDLSDAQTLDQPLNLSLAAWPVRATASDPGWVHGRREPVFVKPRNAFSDGDSALQFGELSESSSVIEFDRTKDAPVVDAPVDLTTSNEALSVVDPFEFAELKRPRFSAQALIDRGGPLADVHAKIKNRVYEQCLQACEPGSRATPATREWLDKMWDRVDMKTWRCTSQFQAGRILASLKFLPDMIQDTPPPVPRKNRASDNAGLKQLVAQWDRKLSVTPPPKPVGPVLDQIVPPPTDIQQEDVTPSDGPPHAPDFPSRVSTGGSWKGLMLSGTRLAGSISQRLMTWVFLKFSPTSQLLCSHFSRRGALWLQVIGCLQVSFYLLSCSVVLTRYSDAFPYWVSFLVLCGVFVWVFLVLGWLLLYFYSRLHPTQSVLLVTTIRRSVMLSFWLLSSANFGNLCAALWSAPQASYVSFLASYSVGHVISGMFSYVYACLQIWPFLLFMWCPRGVVTSVGESV.

The C4-type; atypical zinc finger occupies 8-28 (CMCTPAARVFWNAGQVFCTRC). In terms of domain architecture, Peptidase C31 spans 69-180 (ECTPSGCCWL…QPFCPFEEAH (112 aa)). The segment at 69–182 (ECTPSGCCWL…FCPFEEAHSS (114 aa)) is PCP1-alpha. Residues Cys-76 and His-146 each act as for Nsp1-alpha papain-like cysteine proteinase activity in the active site. Residues 269-384 (PDVFDGKCWL…IFRFGAHKWY (116 aa)) are PCP1-beta. The Peptidase C32 domain maps to 269–385 (PDVFDGKCWL…FRFGAHKWYG (117 aa)). Active-site for Nsp1-beta papain-like cysteine proteinase activity residues include Cys-276 and His-345. Disordered stretches follow at residues 752 to 797 (PSDP…DAGA) and 1050 to 1088 (KPVG…SRVS). The segment covering 775–790 (APASTTTLVREQTPDN) has biased composition (polar residues). Transmembrane regions (helical) follow at residues 1136 to 1156 (LWLQ…CSVV), 1170 to 1190 (FLVL…LLLY), 1211 to 1231 (VMLS…AALW), and 1250 to 1270 (VISG…FLLF).

It is found in the host nucleus. The protein localises to the host cytoplasm. Its subcellular location is the host membrane. Inhibits host IFN-beta production. Plays a role in the degradation of the host transcriptional activator CREBBP protein. The degradation of host CREBBP which is a key component of the IFN enhanceosome is likely responsible for the inhibition of interferon mediated by Nsp1-alpha. Also participates in the inhibition of host NF-kappa-B activation. In terms of biological role, plays a role in the inhibition of the interferon-activated JAK/STAT signal transduction by mediating the ubiquitination and subsequent proteasomal degradation of host KPNA1. Its function is as follows. Plays a role in viral replication. The chain is Replicase polyprotein 1TF from Porcine reproductive and respiratory syndrome virus (strain Lelystad) (PRRSV).